A 174-amino-acid polypeptide reads, in one-letter code: UPF0113 protein AF_0058 (174 aa).

Positions 87–161 (RNRVWVNERG…KVFVENLVDR (75 aa)) constitute a PUA domain.

The protein belongs to the UPF0113 family.

This chain is UPF0113 protein AF_0058, found in Archaeoglobus fulgidus (strain ATCC 49558 / DSM 4304 / JCM 9628 / NBRC 100126 / VC-16).